The sequence spans 305 residues: Ribosomal RNA small subunit methyltransferase H (305 aa).

S-adenosyl-L-methionine is bound by residues 46 to 48 (GGH), aspartate 65, phenylalanine 92, aspartate 108, and histidine 115.

The protein belongs to the methyltransferase superfamily. RsmH family.

The protein localises to the cytoplasm. It catalyses the reaction cytidine(1402) in 16S rRNA + S-adenosyl-L-methionine = N(4)-methylcytidine(1402) in 16S rRNA + S-adenosyl-L-homocysteine + H(+). Its function is as follows. Specifically methylates the N4 position of cytidine in position 1402 (C1402) of 16S rRNA. This Trichormus variabilis (strain ATCC 29413 / PCC 7937) (Anabaena variabilis) protein is Ribosomal RNA small subunit methyltransferase H.